We begin with the raw amino-acid sequence, 521 residues long: NAD(P)H-quinone oxidoreductase subunit 2 (521 aa).

The next 14 helical transmembrane spans lie at 14–34 (VILPEGIVIVTLLTVLVTDLI), 42–62 (LTPALAITGLSAAIAVLTLQW), 79–99 (LSIVFRGIVLLSAAVTILLSI), 109–129 (LGEFITILLTASLGGMFLSGA), 132–152 (LVTIFVSLETLSISSYLLTGY), 167–187 (LLIGAASSAIFLYGVSLLYGL), 207–227 (LALLISLIFVIAGIAFKISAV), 241–261 (PTPIVAFLSVGSKAAGFALAI), 275–295 (WHFVFTALAILSLVLGNVVAL), 303–323 (LLAYSSIAQAGFVMIGLIAGT), 331–351 (VYYLLIYLFMNLGGFACVILF), 375–395 (LGLSLCLLSLGGIPPLAGFFG), 397–417 (LYLFWAGWQAGLYGLVLLALI), and 463–483 (AGLVVCVIATAVAGILSNPLF).

The protein belongs to the complex I subunit 2 family. As to quaternary structure, NDH-1 can be composed of about 15 different subunits; different subcomplexes with different compositions have been identified which probably have different functions.

The protein resides in the cellular thylakoid membrane. It carries out the reaction a plastoquinone + NADH + (n+1) H(+)(in) = a plastoquinol + NAD(+) + n H(+)(out). The enzyme catalyses a plastoquinone + NADPH + (n+1) H(+)(in) = a plastoquinol + NADP(+) + n H(+)(out). In terms of biological role, NDH-1 shuttles electrons from an unknown electron donor, via FMN and iron-sulfur (Fe-S) centers, to quinones in the respiratory and/or the photosynthetic chain. The immediate electron acceptor for the enzyme in this species is believed to be plastoquinone. Couples the redox reaction to proton translocation, and thus conserves the redox energy in a proton gradient. Cyanobacterial NDH-1 also plays a role in inorganic carbon-concentration. The protein is NAD(P)H-quinone oxidoreductase subunit 2 of Synechococcus elongatus (strain ATCC 33912 / PCC 7942 / FACHB-805) (Anacystis nidulans R2).